The primary structure comprises 159 residues: ATP synthase subunit b', chloroplastic (159 aa).

Residues 30–47 form a helical membrane-spanning segment; it reads LMALQFLALTIILNLIYY.

Belongs to the ATPase B chain family. As to quaternary structure, F-type ATPases have 2 components, F(1) - the catalytic core - and F(0) - the membrane proton channel. F(1) has five subunits: alpha(3), beta(3), gamma(1), delta(1), epsilon(1). F(0) has four main subunits: a(1), b(1), b'(1) and c(10-14). The alpha and beta chains form an alternating ring which encloses part of the gamma chain. F(1) is attached to F(0) by a central stalk formed by the gamma and epsilon chains, while a peripheral stalk is formed by the delta, b and b' chains.

The protein resides in the plastid. It is found in the chloroplast thylakoid membrane. Functionally, f(1)F(0) ATP synthase produces ATP from ADP in the presence of a proton or sodium gradient. F-type ATPases consist of two structural domains, F(1) containing the extramembraneous catalytic core and F(0) containing the membrane proton channel, linked together by a central stalk and a peripheral stalk. During catalysis, ATP synthesis in the catalytic domain of F(1) is coupled via a rotary mechanism of the central stalk subunits to proton translocation. Its function is as follows. Component of the F(0) channel, it forms part of the peripheral stalk, linking F(1) to F(0). The b'-subunit is a diverged and duplicated form of b found in plants and photosynthetic bacteria. This chain is ATP synthase subunit b', chloroplastic, found in Antithamnion sp. (Red alga).